A 293-amino-acid polypeptide reads, in one-letter code: Bifunctional protein FolD (293 aa).

Residues 165–167, Thr-192, and Val-233 each bind NADP(+); that span reads GRG.

This sequence belongs to the tetrahydrofolate dehydrogenase/cyclohydrolase family. In terms of assembly, homodimer.

The catalysed reaction is (6R)-5,10-methylene-5,6,7,8-tetrahydrofolate + NADP(+) = (6R)-5,10-methenyltetrahydrofolate + NADPH. It catalyses the reaction (6R)-5,10-methenyltetrahydrofolate + H2O = (6R)-10-formyltetrahydrofolate + H(+). It functions in the pathway one-carbon metabolism; tetrahydrofolate interconversion. Functionally, catalyzes the oxidation of 5,10-methylenetetrahydrofolate to 5,10-methenyltetrahydrofolate and then the hydrolysis of 5,10-methenyltetrahydrofolate to 10-formyltetrahydrofolate. This Streptomyces griseus subsp. griseus (strain JCM 4626 / CBS 651.72 / NBRC 13350 / KCC S-0626 / ISP 5235) protein is Bifunctional protein FolD.